The sequence spans 321 residues: Lipoyl synthase (321 aa).

[4Fe-4S] cluster contacts are provided by C68, C73, C79, C94, C98, C101, and S308. Positions 80–297 constitute a Radical SAM core domain; that stretch reads FNHGTATFMI…KALADELGFT (218 aa).

It belongs to the radical SAM superfamily. Lipoyl synthase family. [4Fe-4S] cluster is required as a cofactor.

It is found in the cytoplasm. The enzyme catalyses [[Fe-S] cluster scaffold protein carrying a second [4Fe-4S](2+) cluster] + N(6)-octanoyl-L-lysyl-[protein] + 2 oxidized [2Fe-2S]-[ferredoxin] + 2 S-adenosyl-L-methionine + 4 H(+) = [[Fe-S] cluster scaffold protein] + N(6)-[(R)-dihydrolipoyl]-L-lysyl-[protein] + 4 Fe(3+) + 2 hydrogen sulfide + 2 5'-deoxyadenosine + 2 L-methionine + 2 reduced [2Fe-2S]-[ferredoxin]. The protein operates within protein modification; protein lipoylation via endogenous pathway; protein N(6)-(lipoyl)lysine from octanoyl-[acyl-carrier-protein]: step 2/2. Its function is as follows. Catalyzes the radical-mediated insertion of two sulfur atoms into the C-6 and C-8 positions of the octanoyl moiety bound to the lipoyl domains of lipoate-dependent enzymes, thereby converting the octanoylated domains into lipoylated derivatives. The polypeptide is Lipoyl synthase (Shewanella baltica (strain OS185)).